A 569-amino-acid chain; its full sequence is Hexose transporter HXT8 (569 aa).

Residues 1–38 (MTDRKTNLPEEPIFEEAEDDGCPSIENSSHLSVPTVEE) form a disordered region. Topologically, residues 1–61 (MTDRKTNLPE…EVVVPEKPAS (61 aa)) are cytoplasmic. Residues 12-21 (PIFEEAEDDG) show a composition bias toward acidic residues. The helical transmembrane segment at 62–82 (AYATVSIMCLCMAFGGFMSGW) threads the bilayer. Topologically, residues 83–118 (DTGTISGFVNQTDFLRRFGNYSHSKNTYYLSNVRTG) are extracellular. N-linked (GlcNAc...) asparagine glycosylation is found at N92 and N102. The helical transmembrane segment at 119–139 (LIVSIFNVGSAIGCLFLSKLG) threads the bilayer. At 140–145 (DIYGRC) the chain is on the cytoplasmic side. A helical membrane pass occupies residues 146–166 (MGLIIVIVVYMVGIVIQIASI). Topologically, residues 167-176 (DKWYQYFIGR) are extracellular. Residues 177 to 197 (IIAGIGAGSISVLAPMLISET) traverse the membrane as a helical segment. Residues 198 to 203 (APKHIR) lie on the Cytoplasmic side of the membrane. A helical membrane pass occupies residues 204–224 (GTLLACWQLMVTFAIFLGYCT). The Extracellular portion of the chain corresponds to 225 to 238 (NYGTKTYSNSVQWR). The chain crosses the membrane as a helical span at residues 239-259 (VPLGLCFAWAIIMIGGMTFVP). Topologically, residues 260-342 (ESPRFLVQVG…INSLQQLTGD (83 aa)) are cytoplasmic. Residues 343–359 (NYFFYYGTTIFKSVGMN) form a helical membrane-spanning segment. The Extracellular portion of the chain corresponds to 360–365 (DSFETS). Residues 366-383 (IVLGIVNFASCFFSLYSV) traverse the membrane as a helical segment. Topologically, residues 384-390 (DKLGRRR) are cytoplasmic. Residues 391–411 (CLLLGAATMTACMVIYASVGV) form a helical membrane-spanning segment. Over 412 to 433 (TRLYPNGKSEPSSKGAGNCTIV) the chain is Extracellular. N429 carries N-linked (GlcNAc...) asparagine glycosylation. The chain crosses the membrane as a helical span at residues 434–454 (FTCFYIFCFSCTWGPVCYVII). The Cytoplasmic portion of the chain corresponds to 455–471 (SETFPLRVRSKCMSVAT). A helical membrane pass occupies residues 472–492 (AANLLWGFLIGFFTPFITSAI). Residue N493 is a topological domain, extracellular. A helical transmembrane segment spans residues 494–514 (FYYGYVFMGCLAFSYFYVFFF). The Cytoplasmic portion of the chain corresponds to 515–569 (VPETKGLTLEEVDEMWMDGVLPWKSESWVPASRRDGDYDNEKLQHDEKPFYKRMF).

This sequence belongs to the major facilitator superfamily. Sugar transporter (TC 2.A.1.1) family.

The protein resides in the membrane. Probable glucose transporter. This is Hexose transporter HXT8 (HXT8) from Saccharomyces cerevisiae (strain ATCC 204508 / S288c) (Baker's yeast).